Here is a 1088-residue protein sequence, read N- to C-terminus: DNA damage-binding protein 1b (1088 aa).

The protein belongs to the DDB1 family. Interacts with DDA1. Binds to KTN80.2/DWA3. Interacts with HTD1.

The protein resides in the nucleus. It functions in the pathway protein modification; protein ubiquitination. Component of light signal transduction machinery. Involved in repression of photomorphogenesis in darkness. Plays a role in DNA repair by forming with DDB2 the UV-damaged DNA-binding protein complex (UV-DDB). In Arabidopsis thaliana (Mouse-ear cress), this protein is DNA damage-binding protein 1b.